The following is a 101-amino-acid chain: Carboxysome shell vertex protein CcmL (101 aa).

Residues 1–84 enclose the BMV domain; it reads MQIAKVRGTV…VDAAVVAIID (84 aa).

Belongs to the CcmL/EutN family. CcmL subfamily. As to quaternary structure, homopentamer. Interacts with full-length CcmM.

It is found in the carboxysome. In terms of biological role, probably forms vertices in the carboxysome, a polyhedral inclusion where RuBisCO (ribulose bisphosphate carboxylase, rbcL-rbcS) is sequestered. Has been modeled to induce curvature upon insertion into an otherwise flat hexagonal molecular layer of CcmK subunits. This Nostoc sp. (strain PCC 7120 / SAG 25.82 / UTEX 2576) protein is Carboxysome shell vertex protein CcmL.